The chain runs to 101 residues: Urease subunit beta (101 aa).

Belongs to the urease beta subunit family. Heterotrimer of UreA (gamma), UreB (beta) and UreC (alpha) subunits. Three heterotrimers associate to form the active enzyme.

It is found in the cytoplasm. The catalysed reaction is urea + 2 H2O + H(+) = hydrogencarbonate + 2 NH4(+). It participates in nitrogen metabolism; urea degradation; CO(2) and NH(3) from urea (urease route): step 1/1. The polypeptide is Urease subunit beta (Actinobacillus pleuropneumoniae serotype 7 (strain AP76)).